A 502-amino-acid polypeptide reads, in one-letter code: Bifunctional purine biosynthesis protein PurH (502 aa).

An MGS-like domain is found at 1–144; that stretch reads MKKRALISVF…KNFQDVVVIS (144 aa).

The protein belongs to the PurH family.

The enzyme catalyses (6R)-10-formyltetrahydrofolate + 5-amino-1-(5-phospho-beta-D-ribosyl)imidazole-4-carboxamide = 5-formamido-1-(5-phospho-D-ribosyl)imidazole-4-carboxamide + (6S)-5,6,7,8-tetrahydrofolate. It catalyses the reaction IMP + H2O = 5-formamido-1-(5-phospho-D-ribosyl)imidazole-4-carboxamide. It participates in purine metabolism; IMP biosynthesis via de novo pathway; 5-formamido-1-(5-phospho-D-ribosyl)imidazole-4-carboxamide from 5-amino-1-(5-phospho-D-ribosyl)imidazole-4-carboxamide (10-formyl THF route): step 1/1. It functions in the pathway purine metabolism; IMP biosynthesis via de novo pathway; IMP from 5-formamido-1-(5-phospho-D-ribosyl)imidazole-4-carboxamide: step 1/1. The protein is Bifunctional purine biosynthesis protein PurH of Clostridium beijerinckii (strain ATCC 51743 / NCIMB 8052) (Clostridium acetobutylicum).